The chain runs to 106 residues: MIITTTPQIEGRRITRYCGVVAGEAILGANVFKDLFAGLRDIVGGRSATYERELQRAREIALKELEERAQELGANAVVGVDLDYEVLGQGNGMLMVSASGTAVVLE.

The protein belongs to the UPF0145 family.

This Delftia acidovorans (strain DSM 14801 / SPH-1) protein is UPF0145 protein Daci_3728.